Here is a 147-residue protein sequence, read N- to C-terminus: UPF0735 ACT domain-containing protein Cthe_1377 (147 aa).

One can recognise an ACT domain in the interval threonine 71–arginine 146.

The protein belongs to the UPF0735 family.

The sequence is that of UPF0735 ACT domain-containing protein Cthe_1377 from Acetivibrio thermocellus (strain ATCC 27405 / DSM 1237 / JCM 9322 / NBRC 103400 / NCIMB 10682 / NRRL B-4536 / VPI 7372) (Clostridium thermocellum).